Consider the following 194-residue polypeptide: Holliday junction branch migration complex subunit RuvA (194 aa).

Positions 1–63 (MFEYLKGTVA…EDELSLYGFM (63 aa)) are domain I. Residues 64–142 (SIEELDMFQK…KTNVVYDYTL (79 aa)) form a domain II region. The flexible linker stretch occupies residues 143 to 151 (FNDDHKDDD). Residues 151 to 194 (DEAVQALMALGYSKLESEKAVEAVRDMSLGTEDVIKRALKWLMK) form a domain III region.

It belongs to the RuvA family. As to quaternary structure, homotetramer. Forms an RuvA(8)-RuvB(12)-Holliday junction (HJ) complex. HJ DNA is sandwiched between 2 RuvA tetramers; dsDNA enters through RuvA and exits via RuvB. An RuvB hexamer assembles on each DNA strand where it exits the tetramer. Each RuvB hexamer is contacted by two RuvA subunits (via domain III) on 2 adjacent RuvB subunits; this complex drives branch migration. In the full resolvosome a probable DNA-RuvA(4)-RuvB(12)-RuvC(2) complex forms which resolves the HJ.

Its subcellular location is the cytoplasm. In terms of biological role, the RuvA-RuvB-RuvC complex processes Holliday junction (HJ) DNA during genetic recombination and DNA repair, while the RuvA-RuvB complex plays an important role in the rescue of blocked DNA replication forks via replication fork reversal (RFR). RuvA specifically binds to HJ cruciform DNA, conferring on it an open structure. The RuvB hexamer acts as an ATP-dependent pump, pulling dsDNA into and through the RuvAB complex. HJ branch migration allows RuvC to scan DNA until it finds its consensus sequence, where it cleaves and resolves the cruciform DNA. In Alkaliphilus oremlandii (strain OhILAs) (Clostridium oremlandii (strain OhILAs)), this protein is Holliday junction branch migration complex subunit RuvA.